A 598-amino-acid polypeptide reads, in one-letter code: Probable translation initiation factor IF-2 (598 aa).

Positions 3-225 constitute a tr-type G domain; the sequence is LRCPIVSVLG…GLAQKFLEQK (223 aa). The G1 stretch occupies residues 12 to 19; sequence GHVDHGKT. Position 12–19 (12–19) interacts with GTP; that stretch reads GHVDHGKT. The G2 stretch occupies residues 37 to 41; it reads GITQH. The G3 stretch occupies residues 76 to 79; the sequence is DTPG. GTP contacts are provided by residues 76–80 and 130–133; these read DTPGH and NKLD. The tract at residues 130–133 is G4; it reads NKLD. The interval 200 to 202 is G5; it reads SAM.

This sequence belongs to the TRAFAC class translation factor GTPase superfamily. Classic translation factor GTPase family. IF-2 subfamily.

Functionally, function in general translation initiation by promoting the binding of the formylmethionine-tRNA to ribosomes. Seems to function along with eIF-2. This Methanococcus maripaludis (strain C6 / ATCC BAA-1332) protein is Probable translation initiation factor IF-2.